Here is a 53-residue protein sequence, read N- to C-terminus: Mitochondrial sheath formation-associated protein (53 aa).

Mitochondrial intermembrane segments lie at residues 1–6 and 1–7; these read MIVLGW and MIVLGWM. 2 helical membrane passes run 7–23 and 8–24; these read MLFVGLATYMGTFPEAM and LFVGLATYMGTFPEAMP. Cytoplasmic loops occupy residues 24–53 and 25–40; these read PPTLKWKERLPGQENKARRRIQALEEELLL and PTLKWKERLPGQENKA.

In terms of assembly, interacts with VDAC3. As to expression, testis specific. Detected only in germ cells at the step of spermiogenesis (at protein level). Expressed during the middle steps of spermatid development. In terms of tissue distribution, testis specific. Detected only in germ cells at the step of spermiogenesis (at protein level). Expressed in the late steps of spermatid development.

The protein localises to the mitochondrion outer membrane. In terms of biological role, regulates sperm development. May be involved in mitochondrial sheath formation. This chain is Mitochondrial sheath formation-associated protein, found in Mus musculus (Mouse).